The chain runs to 161 residues: Ribosome maturation factor RimP (161 aa).

This sequence belongs to the RimP family.

The protein localises to the cytoplasm. Required for maturation of 30S ribosomal subunits. The chain is Ribosome maturation factor RimP from Herminiimonas arsenicoxydans.